The chain runs to 284 residues: Putative xyloglucan endotransglucosylase/hydrolase protein 13 (284 aa).

The N-terminal stretch at 1-24 (MAAFTTKQSLLLLSLLLLISLSAG) is a signal peptide. Residues 25–214 (SFYDNFDITW…WTNAPFSASY (190 aa)) form the GH16 domain. The active-site Nucleophile is E100. The active-site Proton donor is E104. E104 is a xyloglucan binding site. The N-linked (GlcNAc...) asparagine glycan is linked to N108. Residues 117–119 (HTN), 127–129 (NRE), 193–194 (DW), and G198 contribute to the xyloglucan site. Intrachain disulfides connect C223–C234 and C267–C281. Residue R272 participates in xyloglucan binding.

Belongs to the glycosyl hydrolase 16 family. XTH group 2 subfamily. Contains at least one intrachain disulfide bond essential for its enzymatic activity.

Its subcellular location is the secreted. It localises to the cell wall. The protein resides in the extracellular space. It is found in the apoplast. It carries out the reaction breaks a beta-(1-&gt;4) bond in the backbone of a xyloglucan and transfers the xyloglucanyl segment on to O-4 of the non-reducing terminal glucose residue of an acceptor, which can be a xyloglucan or an oligosaccharide of xyloglucan.. May catalyze xyloglucan endohydrolysis (XEH) and/or endotransglycosylation (XET). Cleaves and religates xyloglucan polymers, an essential constituent of the primary cell wall, and thereby participates in cell wall construction of growing tissues. This is Putative xyloglucan endotransglucosylase/hydrolase protein 13 (XTH13) from Arabidopsis thaliana (Mouse-ear cress).